Here is a 394-residue protein sequence, read N- to C-terminus: LL-diaminopimelate aminotransferase (394 aa).

2 residues coordinate substrate: Tyr14 and Gly41. Pyridoxal 5'-phosphate contacts are provided by residues Tyr71, 104–105, Tyr128, Asn174, Tyr205, and 233–235; these read AK and SFS. The substrate site is built by Lys105, Tyr128, and Asn174. The residue at position 236 (Lys236) is an N6-(pyridoxal phosphate)lysine. Positions 244 and 275 each coordinate pyridoxal 5'-phosphate. Residues Asn275 and Arg369 each contribute to the substrate site.

This sequence belongs to the class-I pyridoxal-phosphate-dependent aminotransferase family. LL-diaminopimelate aminotransferase subfamily. In terms of assembly, homodimer. Pyridoxal 5'-phosphate is required as a cofactor.

The enzyme catalyses (2S,6S)-2,6-diaminopimelate + 2-oxoglutarate = (S)-2,3,4,5-tetrahydrodipicolinate + L-glutamate + H2O + H(+). It functions in the pathway amino-acid biosynthesis; L-lysine biosynthesis via DAP pathway; LL-2,6-diaminopimelate from (S)-tetrahydrodipicolinate (aminotransferase route): step 1/1. Its function is as follows. Involved in the synthesis of meso-diaminopimelate (m-DAP or DL-DAP), required for both lysine and peptidoglycan biosynthesis. Catalyzes the direct conversion of tetrahydrodipicolinate to LL-diaminopimelate. The protein is LL-diaminopimelate aminotransferase of Chlamydia trachomatis serovar L2b (strain UCH-1/proctitis).